Here is a 201-residue protein sequence, read N- to C-terminus: Superoxide dismutase [Mn] (201 aa).

Positions 27, 81, 163, and 167 each coordinate Mn(2+).

It belongs to the iron/manganese superoxide dismutase family. As to quaternary structure, homodimer. It depends on Mn(2+) as a cofactor.

The protein resides in the secreted. It carries out the reaction 2 superoxide + 2 H(+) = H2O2 + O2. Functionally, destroys superoxide anion radicals which are normally produced within the cells and which are toxic to biological systems. The protein is Superoxide dismutase [Mn] (sodA) of Streptococcus pyogenes serotype M18 (strain MGAS8232).